The chain runs to 290 residues: MAESVVGEFLEFLKKNKRLSKNTLESYSRDVEQFLTYMNEHGINFCSAKKSTIVNYLYFLKQQGKSQATISRALSSIKAFYHYLFAKKKIEEDPSYGINAPKVEKKEPVTLTVEQVDMLLSFDFGKDEKGLRDKALIELMYASGLKVSEVISLKIEDVNLASGYIVVRSGKERVIPIGSYAVAALQEYIEKGRKPRKGEKALFLNLRGKRLTRQGCWKIIKEYADKISPGLPLTPNILRKSFAQHMLQNGADLKTVQEMLGYEVNFGNNLLSLVSRSKMKEVYNKFHPRA.

Positions 1 to 85 constitute a Core-binding (CB) domain; it reads MAESVVGEFL…SIKAFYHYLF (85 aa). The region spanning 106–290 is the Tyr recombinase domain; that stretch reads KEPVTLTVEQ…EVYNKFHPRA (185 aa). Residue arginine 239 is part of the active site. Tyrosine 283 acts as the O-(3'-phospho-DNA)-tyrosine intermediate in catalysis.

This sequence belongs to the 'phage' integrase family.

Its subcellular location is the cytoplasm. Its function is as follows. Site-specific tyrosine recombinase, which acts by catalyzing the cutting and rejoining of the recombining DNA molecules. The polypeptide is Putative tyrosine recombinase TTE1313 (Caldanaerobacter subterraneus subsp. tengcongensis (strain DSM 15242 / JCM 11007 / NBRC 100824 / MB4) (Thermoanaerobacter tengcongensis)).